The chain runs to 374 residues: MATPRTLVPILPPVAALLLLLVAASSIPILAAAQPADACGGAPDQAAADGACHDVPRALRLKLIAIPTILVSSVVGVCLPLLSRSVPALRPDGGLFAVVKAFASGVILATGYMHVLPDAFNNLTSPCLPRKPWSEFPFAAFVAMLAAVSTLMADSLMLTYYNRSKPRPSSGGDVAAVADHGESPDQGHRHGHGHGHGHGMAVAKPDDVEATQVQLRRNRVVVQVLEIGIVVHSVVIGLGMGASQNVCTIRPLVAAMCFHQMFEGMGLGGCILQAEYGRRMRSVLVFFFSTTTPFGIALGLALTRVYRDNSPTALIVVGLLNAASAGLLHYMALVELLAADFMGPKLQGNVRLQLAAFLAVLLGAGGMSVMAKWA.

Positions 1–33 are cleaved as a signal peptide; that stretch reads MATPRTLVPILPPVAALLLLLVAASSIPILAAA. The Extracellular portion of the chain corresponds to 34–62; that stretch reads QPADACGGAPDQAAADGACHDVPRALRLK. A helical membrane pass occupies residues 63–83; the sequence is LIAIPTILVSSVVGVCLPLLS. Over 84–92 the chain is Cytoplasmic; that stretch reads RSVPALRPD. The chain crosses the membrane as a helical span at residues 93–113; sequence GGLFAVVKAFASGVILATGYM. Over 114 to 137 the chain is Extracellular; sequence HVLPDAFNNLTSPCLPRKPWSEFP. A helical membrane pass occupies residues 138 to 158; sequence FAAFVAMLAAVSTLMADSLML. The Cytoplasmic segment spans residues 159 to 219; it reads TYYNRSKPRP…ATQVQLRRNR (61 aa). Residues 166 to 199 form a disordered region; the sequence is PRPSSGGDVAAVADHGESPDQGHRHGHGHGHGHG. Over residues 179-188 the composition is skewed to basic and acidic residues; the sequence is DHGESPDQGH. A helical transmembrane segment spans residues 220-240; the sequence is VVVQVLEIGIVVHSVVIGLGM. The Extracellular portion of the chain corresponds to 241-251; the sequence is GASQNVCTIRP. Residues 252-272 traverse the membrane as a helical segment; sequence LVAAMCFHQMFEGMGLGGCIL. Over 273–282 the chain is Cytoplasmic; that stretch reads QAEYGRRMRS. Residues 283-303 traverse the membrane as a helical segment; the sequence is VLVFFFSTTTPFGIALGLALT. The Extracellular portion of the chain corresponds to 304–313; that stretch reads RVYRDNSPTA. Residues 314–334 traverse the membrane as a helical segment; that stretch reads LIVVGLLNAASAGLLHYMALV. Residues 335–353 are Cytoplasmic-facing; the sequence is ELLAADFMGPKLQGNVRLQ. Residues 354–374 traverse the membrane as a helical segment; it reads LAAFLAVLLGAGGMSVMAKWA.

This sequence belongs to the ZIP transporter (TC 2.A.5) family. Expressed in companion cells in the upper region of the root.

Its subcellular location is the cell membrane. Its function is as follows. Iron transporter involved in the uptake of iron from the rhizosphere across the plasma membrane in the root epidermal layer. May also transport other divalent cations. This is Fe(2+) transport protein 1 (IRT1) from Oryza sativa subsp. japonica (Rice).